Consider the following 399-residue polypeptide: Beta-1,4-galactosyltransferase 1 (399 aa).

At 1 to 24 (MRFREQFLGGSAAMPGATLQRACR) the chain is on the cytoplasmic side. Residues 25–44 (LLVAVCALHLGVTLVYYLSG) traverse the membrane as a helical; Signal-anchor for type II membrane protein segment. At 45–399 (RDLSRLPQLV…QITVDIGTPR (355 aa)) the chain is on the lumenal side. A disordered region spans residues 61 to 113 (QGGTNGAAASKQPPGEQRPRGARPPPPLGVSPKPRPGLDSSPGAASGPGLKSN). Residues 82–95 (ARPPPPLGVSPKPR) show a composition bias toward pro residues. Asn113 carries an N-linked (GlcNAc...) asparagine glycan. A disulfide bridge connects residues Cys131 and Cys173. UDP-alpha-D-galactose contacts are provided by residues 184 to 188 (PFRNR), 223 to 225 (FNR), 250 to 251 (VD), and Trp311. Cys244 and Cys263 form a disulfide bridge. Asp251 provides a ligand contact to Mn(2+). Residue 313-316 (GEDD) coordinates N-acetyl-D-glucosamine. Position 344 (His344) interacts with Mn(2+). Residue 344–346 (HSR) participates in UDP-alpha-D-galactose binding. Position 356 (Arg356) interacts with N-acetyl-D-glucosamine.

It belongs to the glycosyltransferase 7 family. Homodimer; and heterodimer with alpha-lactalbumin to form lactose synthase. Interacts (via N-terminal cytoplasmic domain) with UBE2Q1 (via N-terminus); the interaction is direct. The cofactor is Mn(2+). The soluble form derives from the membrane forms by proteolytic processing.

The protein localises to the golgi apparatus. It localises to the golgi stack membrane. Its subcellular location is the cell membrane. It is found in the cell surface. The protein resides in the cell projection. The protein localises to the filopodium. It localises to the secreted. It catalyses the reaction D-glucose + UDP-alpha-D-galactose = lactose + UDP + H(+). The enzyme catalyses an N-acetyl-beta-D-glucosaminyl derivative + UDP-alpha-D-galactose = a beta-D-galactosyl-(1-&gt;4)-N-acetyl-beta-D-glucosaminyl derivative + UDP + H(+). The catalysed reaction is N-acetyl-D-glucosamine + UDP-alpha-D-galactose = beta-D-galactosyl-(1-&gt;4)-N-acetyl-D-glucosamine + UDP + H(+). It carries out the reaction a beta-D-GlcNAc-(1-&gt;3)-beta-D-Gal-(1-&gt;4)-beta-D-Glc-(1&lt;-&gt;1)-Cer(d18:1(4E)) + UDP-alpha-D-galactose = a neolactoside nLc4Cer(d18:1(4E)) + UDP + H(+). It catalyses the reaction a beta-D-glucosylceramide + UDP-alpha-D-galactose = a beta-D-galactosyl-(1-&gt;4)-beta-D-glucosyl-(1&lt;-&gt;1)-ceramide + UDP + H(+). The enzyme catalyses a neolactoside IV(3)-beta-GlcNAc-nLc4Cer + UDP-alpha-D-galactose = a neolactoside nLc6Cer + UDP + H(+). The protein operates within protein modification; protein glycosylation. Its function is as follows. The Golgi complex form catalyzes the production of lactose in the lactating mammary gland and could also be responsible for the synthesis of complex-type N-linked oligosaccharides in many glycoproteins as well as the carbohydrate moieties of glycolipids. The cell surface form functions as a recognition molecule during a variety of cell to cell and cell to matrix interactions, as those occurring during development and egg fertilization, by binding to specific oligosaccharide ligands on opposing cells or in the extracellular matrix. The secreted form is responsible for the synthesis of complex-type to N-linked oligosaccharides in many glycoproteins as well as the carbohydrate moieties of glycolipids. This is Beta-1,4-galactosyltransferase 1 from Mus musculus (Mouse).